The sequence spans 435 residues: 3-phosphoshikimate 1-carboxyvinyltransferase (435 aa).

3-phosphoshikimate contacts are provided by Lys15, Ser16, and Arg20. Lys15 lines the phosphoenolpyruvate pocket. Phosphoenolpyruvate is bound by residues Gly96 and Arg124. The 3-phosphoshikimate site is built by Ser169, Gln171, Ser195, Asp318, and Lys345. Gln171 serves as a coordination point for phosphoenolpyruvate. Asp318 serves as the catalytic Proton acceptor. The phosphoenolpyruvate site is built by Arg349 and Arg393.

The protein belongs to the EPSP synthase family. As to quaternary structure, monomer.

The protein localises to the cytoplasm. The catalysed reaction is 3-phosphoshikimate + phosphoenolpyruvate = 5-O-(1-carboxyvinyl)-3-phosphoshikimate + phosphate. The protein operates within metabolic intermediate biosynthesis; chorismate biosynthesis; chorismate from D-erythrose 4-phosphate and phosphoenolpyruvate: step 6/7. Functionally, catalyzes the transfer of the enolpyruvyl moiety of phosphoenolpyruvate (PEP) to the 5-hydroxyl of shikimate-3-phosphate (S3P) to produce enolpyruvyl shikimate-3-phosphate and inorganic phosphate. The polypeptide is 3-phosphoshikimate 1-carboxyvinyltransferase (Chlorobium chlorochromatii (strain CaD3)).